An 88-amino-acid chain; its full sequence is Small ribosomal subunit protein uS15 (88 aa).

The protein belongs to the universal ribosomal protein uS15 family. In terms of assembly, part of the 30S ribosomal subunit. Forms a bridge to the 50S subunit in the 70S ribosome, contacting the 23S rRNA.

Functionally, one of the primary rRNA binding proteins, it binds directly to 16S rRNA where it helps nucleate assembly of the platform of the 30S subunit by binding and bridging several RNA helices of the 16S rRNA. Its function is as follows. Forms an intersubunit bridge (bridge B4) with the 23S rRNA of the 50S subunit in the ribosome. This Syntrophus aciditrophicus (strain SB) protein is Small ribosomal subunit protein uS15.